We begin with the raw amino-acid sequence, 736 residues long: Centrosomal protein kizuna (736 aa).

A coiled-coil region spans residues 10 to 35; sequence HRAMKLQRNLRHCEGKRLELERELFQ. A compositionally biased stretch (polar residues) spans 192–208; sequence NTSFQLSQKMPVTSVAS. 4 disordered regions span residues 192-238, 279-305, 323-348, and 642-690; these read NTSF…SAQL, SFTH…DKHS, EDKQ…SYPP, and TVEE…NMST. The span at 210–219 shows a compositional bias: basic and acidic residues; it reads EDGRTHRAQI. Residues 328–339 show a composition bias toward polar residues; that stretch reads LDSSSDLTVSIS. The segment covering 658-668 has biased composition (low complexity); it reads SETSFSSSEKS. The segment covering 678 to 690 has biased composition (polar residues); that stretch reads IQPNYMKSNNMST.

It belongs to the kizuna family.

The protein localises to the cytoplasm. It localises to the cytoskeleton. The protein resides in the microtubule organizing center. It is found in the centrosome. Its subcellular location is the cilium basal body. Functionally, centrosomal protein required for establishing a robust mitotic centrosome architecture that can endure the forces that converge on the centrosomes during spindle formation. Required for stabilizing the expanded pericentriolar material around the centriole. The chain is Centrosomal protein kizuna (kiz) from Xenopus laevis (African clawed frog).